An 82-amino-acid polypeptide reads, in one-letter code: uncharacterized protein (82 aa).

Residues 60–82 (YKRRRPDHMMKRNSPSYTGDHKT) are disordered.

This is an uncharacterized protein from Saccharomyces cerevisiae (strain ATCC 204508 / S288c) (Baker's yeast).